The primary structure comprises 485 residues: NADH-quinone oxidoreductase subunit N (485 aa).

Helical transmembrane passes span 8 to 28, 35 to 55, 71 to 91, 105 to 125, 127 to 147, 159 to 179, 203 to 223, 235 to 255, 271 to 291, 297 to 317, 326 to 346, 373 to 393, 408 to 430, and 455 to 475; these read LIALLPLLIVGLTVVVVMLSI, FLNATLSVIGLNAALVSLWFV, GFAMLYTGLVLLASLATCTFA, FYLLVLIASLGGILLANANHL, ALFLGIELISLPLFGLIGYAF, YTILSAAASSFLLFGMALVYA, LLAGFGLMIVGLGFKLSLVPF, PAPVSTFLATASKIAIFGVVM, VVLGIIAFASIIFGNLMALSQ, LLGYSSISHLGYLLVALIALQ, VGVYLAGYLFSSLGAFGVVSL, AAVMTVMMLSLAGIPMTLGFI, WWLVAAVVVGSAIGLYYYLRVAV, and IVVLISALLVLVLGVWPQPLI.

This sequence belongs to the complex I subunit 2 family. NDH-1 is composed of 13 different subunits. Subunits NuoA, H, J, K, L, M, N constitute the membrane sector of the complex.

It localises to the cell inner membrane. The catalysed reaction is a quinone + NADH + 5 H(+)(in) = a quinol + NAD(+) + 4 H(+)(out). NDH-1 shuttles electrons from NADH, via FMN and iron-sulfur (Fe-S) centers, to quinones in the respiratory chain. The immediate electron acceptor for the enzyme in this species is believed to be ubiquinone. Couples the redox reaction to proton translocation (for every two electrons transferred, four hydrogen ions are translocated across the cytoplasmic membrane), and thus conserves the redox energy in a proton gradient. The protein is NADH-quinone oxidoreductase subunit N of Salmonella schwarzengrund (strain CVM19633).